The sequence spans 64 residues: Large ribosomal subunit protein bL35 (64 aa).

Belongs to the bacterial ribosomal protein bL35 family.

This Clavibacter michiganensis subsp. michiganensis (strain NCPPB 382) protein is Large ribosomal subunit protein bL35.